The following is a 393-amino-acid chain: tRNA(Met) cytidine acetate ligase (393 aa).

ATP contacts are provided by glycine 81, asparagine 142, and arginine 167.

It belongs to the TmcAL family.

The protein localises to the cytoplasm. The catalysed reaction is cytidine(34) in elongator tRNA(Met) + acetate + ATP = N(4)-acetylcytidine(34) in elongator tRNA(Met) + AMP + diphosphate. Its function is as follows. Catalyzes the formation of N(4)-acetylcytidine (ac(4)C) at the wobble position of elongator tRNA(Met), using acetate and ATP as substrates. First activates an acetate ion to form acetyladenylate (Ac-AMP) and then transfers the acetyl group to tRNA to form ac(4)C34. This chain is tRNA(Met) cytidine acetate ligase, found in Bacillus mycoides (strain KBAB4) (Bacillus weihenstephanensis).